We begin with the raw amino-acid sequence, 200 residues long: MNDRMVWIDCEMTGLSLSDDALIEVAALVTDSELNVLGEGVDIVIRPPDAALETMPEVVRTMHTASGLLDELAAGTTLADAEAQVLAYVREHVKEPGKAPLCGNSVGTDRGFLARDMSALETYLHYRIVDVSSVKELARRWYPRAYFNSPEKSGNHRALADIRESIAELRYYREAIFVPQPGPDSETARTIAAKHVLPAQ.

One can recognise an Exonuclease domain in the interval 5 to 169 (MVWIDCEMTG…ADIRESIAEL (165 aa)). Residue Tyr126 is part of the active site.

This sequence belongs to the oligoribonuclease family.

Its subcellular location is the cytoplasm. Functionally, 3'-to-5' exoribonuclease specific for small oligoribonucleotides. The protein is Oligoribonuclease of Streptomyces avermitilis (strain ATCC 31267 / DSM 46492 / JCM 5070 / NBRC 14893 / NCIMB 12804 / NRRL 8165 / MA-4680).